The following is a 116-amino-acid chain: Large ribosomal subunit protein bL19 (116 aa).

This sequence belongs to the bacterial ribosomal protein bL19 family.

Its function is as follows. This protein is located at the 30S-50S ribosomal subunit interface and may play a role in the structure and function of the aminoacyl-tRNA binding site. The polypeptide is Large ribosomal subunit protein bL19 (Lactobacillus gasseri (strain ATCC 33323 / DSM 20243 / BCRC 14619 / CIP 102991 / JCM 1131 / KCTC 3163 / NCIMB 11718 / NCTC 13722 / AM63)).